The chain runs to 189 residues: Phosphoheptose isomerase (189 aa).

One can recognise an SIS domain in the interval 33–189 (CTDTLKAGNK…ELVEREIYGG (157 aa)). A substrate-binding site is contributed by 48-50 (NGG). Zn(2+) is bound by residues H57 and E61. Substrate-binding positions include E61, 90–91 (ND), 116–118 (STS), S121, and Q168. Residues Q168 and H176 each contribute to the Zn(2+) site.

This sequence belongs to the SIS family. GmhA subfamily. Zn(2+) is required as a cofactor.

The protein resides in the cytoplasm. The catalysed reaction is 2 D-sedoheptulose 7-phosphate = D-glycero-alpha-D-manno-heptose 7-phosphate + D-glycero-beta-D-manno-heptose 7-phosphate. The protein operates within carbohydrate biosynthesis; D-glycero-D-manno-heptose 7-phosphate biosynthesis; D-glycero-alpha-D-manno-heptose 7-phosphate and D-glycero-beta-D-manno-heptose 7-phosphate from sedoheptulose 7-phosphate: step 1/1. Its function is as follows. Catalyzes the isomerization of sedoheptulose 7-phosphate in D-glycero-D-manno-heptose 7-phosphate. The protein is Phosphoheptose isomerase of Akkermansia muciniphila (strain ATCC BAA-835 / DSM 22959 / JCM 33894 / BCRC 81048 / CCUG 64013 / CIP 107961 / Muc).